The sequence spans 518 residues: uncharacterized protein (518 aa).

2 consecutive ABC transporter domains span residues 4-260 and 324-518; these read LSVK…QLEA and LIFE…TKVL. ATP is bound by residues 36-43 and 357-364; these read GANGEGKS and GANGIGKT.

The protein belongs to the ABC transporter superfamily.

This is an uncharacterized protein from Bacillus subtilis (strain 168).